The sequence spans 471 residues: tRNA-2-methylthio-N(6)-dimethylallyladenosine synthase (471 aa).

One can recognise an MTTase N-terminal domain in the interval 33-151; sequence KKYMITTYGC…FPELLSRSME (119 aa). The [4Fe-4S] cluster site is built by Cys42, Cys78, Cys112, Cys188, Cys192, and Cys195. The 231-residue stretch at 174–404 folds into the Radical SAM core domain; it reads RKYDLKGFIN…LDKVNEISAE (231 aa). The 64-residue stretch at 407 to 470 folds into the TRAM domain; that stretch reads QSYLNKVVEV…TFSLNGEVIQ (64 aa).

It belongs to the methylthiotransferase family. MiaB subfamily. Monomer. [4Fe-4S] cluster serves as cofactor.

It localises to the cytoplasm. The enzyme catalyses N(6)-dimethylallyladenosine(37) in tRNA + (sulfur carrier)-SH + AH2 + 2 S-adenosyl-L-methionine = 2-methylsulfanyl-N(6)-dimethylallyladenosine(37) in tRNA + (sulfur carrier)-H + 5'-deoxyadenosine + L-methionine + A + S-adenosyl-L-homocysteine + 2 H(+). Its function is as follows. Catalyzes the methylthiolation of N6-(dimethylallyl)adenosine (i(6)A), leading to the formation of 2-methylthio-N6-(dimethylallyl)adenosine (ms(2)i(6)A) at position 37 in tRNAs that read codons beginning with uridine. In Alkaliphilus oremlandii (strain OhILAs) (Clostridium oremlandii (strain OhILAs)), this protein is tRNA-2-methylthio-N(6)-dimethylallyladenosine synthase.